The sequence spans 468 residues: Histone acetyltransferase type B catalytic subunit (468 aa).

Phosphoserine is present on S8. Interaction with histone H4 N-terminus stretches follow at residues 44–46 (EEE) and 208–210 (YKF). Acetyl-CoA contacts are provided by residues 248 to 250 (FLI) and 255 to 261 (QKSGNGS). Residue E283 is the Proton donor/acceptor of the active site. A disordered region spans residues 442–468 (SSNLKRKLDDDENTEGSSSKKARVEDA).

It belongs to the HAT1 family. In terms of assembly, component of the HAT-B complex composed of at least HAT1 and HAT2. The HAT-B complex binds to histone H4 tail. In the nucleus, interacts with GSK1 and SSB1. In the cytoplasm, interacts with ATG3 and ATG9. Post-translationally, phosphorylated at Ser-8 by GSK1 in the nucleus which impairs its translocation to the cytoplasm through interfering the interaction between HAT1 and SSB1. Dephosphorylation under nutrient starvation conditions promotes the interaction between HAT1 and SSB1 and results in the translocation of HAT1 from the nucleus to the cytoplasm in order to acetylate ATG3 and ATG9.

It is found in the nucleus. The protein resides in the cytoplasm. The protein localises to the preautophagosomal structure. It carries out the reaction L-lysyl-[protein] + acetyl-CoA = N(6)-acetyl-L-lysyl-[protein] + CoA + H(+). In terms of biological role, catalytic component of the histone acetylase B (HAT-B) complex. Has intrinsic substrate specificity that modifies lysine in recognition sequence GXGKXG. Involved in DNA double-strand break repair. Required for appressorium turgor pressure, autophagy and conidial nuclear degradation. During the germination process and upon starvation conditions, translocates from the nucleus to the cytoplasm where it acetylates ATG3 at 'lys-262' and 'Lys-267', thus influencing autophagy through controlling ATG3-ATG8 interaction. Also acetylates ATG9 at 'Lys-621' to regulate ATG9 binding to vesicles, which is also important for autophagy and pathogenicity. The protein is Histone acetyltransferase type B catalytic subunit of Pyricularia oryzae (strain 70-15 / ATCC MYA-4617 / FGSC 8958) (Rice blast fungus).